Reading from the N-terminus, the 162-residue chain is MIKTKKNRYEVYALGQHICMSPHKARRVIDQIRGRSYEETMMILELMPYRACYPILKLVYSAAANASHNMGFNERDLVISKAEVNQGTTVKKLKPRAQGRSYPIKRPTCSITIVLKNTSVNEEEFKRYQYTINQPGGLITKEKYTDMRCYDMYNNGGLWDKK.

It belongs to the universal ribosomal protein uL22 family. In terms of assembly, part of the 50S ribosomal subunit.

The protein localises to the plastid. It localises to the chloroplast. Functionally, this protein binds specifically to 23S rRNA. Its function is as follows. The globular domain of the protein is located near the polypeptide exit tunnel on the outside of the subunit, while an extended beta-hairpin is found that lines the wall of the exit tunnel in the center of the 70S ribosome. This Cucumis sativus (Cucumber) protein is Large ribosomal subunit protein uL22c (rpl22).